Here is a 268-residue protein sequence, read N- to C-terminus: UPF0294 protein ETA_26410 (268 aa).

The protein belongs to the UPF0294 family.

Its subcellular location is the cytoplasm. In Erwinia tasmaniensis (strain DSM 17950 / CFBP 7177 / CIP 109463 / NCPPB 4357 / Et1/99), this protein is UPF0294 protein ETA_26410.